The following is a 546-amino-acid chain: Chaperonin GroEL (546 aa).

Residues 30–33 (TLGP), Lys51, 87–91 (DGTTT), Gly415, 479–481 (NAA), and Asp495 contribute to the ATP site.

Belongs to the chaperonin (HSP60) family. In terms of assembly, forms a cylinder of 14 subunits composed of two heptameric rings stacked back-to-back. Interacts with the co-chaperonin GroES.

It localises to the cytoplasm. The catalysed reaction is ATP + H2O + a folded polypeptide = ADP + phosphate + an unfolded polypeptide.. In terms of biological role, together with its co-chaperonin GroES, plays an essential role in assisting protein folding. The GroEL-GroES system forms a nano-cage that allows encapsulation of the non-native substrate proteins and provides a physical environment optimized to promote and accelerate protein folding. This chain is Chaperonin GroEL, found in Paraburkholderia phytofirmans (strain DSM 17436 / LMG 22146 / PsJN) (Burkholderia phytofirmans).